Here is a 249-residue protein sequence, read N- to C-terminus: 5'-nucleotidase SurE (249 aa).

Positions 8, 9, 39, and 91 each coordinate a divalent metal cation.

It belongs to the SurE nucleotidase family. Requires a divalent metal cation as cofactor.

The protein resides in the cytoplasm. It catalyses the reaction a ribonucleoside 5'-phosphate + H2O = a ribonucleoside + phosphate. In terms of biological role, nucleotidase that shows phosphatase activity on nucleoside 5'-monophosphates. This Pseudomonas paraeruginosa (strain DSM 24068 / PA7) (Pseudomonas aeruginosa (strain PA7)) protein is 5'-nucleotidase SurE.